Consider the following 110-residue polypeptide: Nucleoid-associated protein RALTA_A1934 (110 aa).

A compositionally biased stretch (polar residues) spans 88–98 (TTQEKMGSMTS). A disordered region spans residues 88–110 (TTQEKMGSMTSGLPLPPGFKLPF). Pro residues predominate over residues 101–110 (PLPPGFKLPF).

This sequence belongs to the YbaB/EbfC family. In terms of assembly, homodimer.

Its subcellular location is the cytoplasm. The protein resides in the nucleoid. Functionally, binds to DNA and alters its conformation. May be involved in regulation of gene expression, nucleoid organization and DNA protection. This chain is Nucleoid-associated protein RALTA_A1934, found in Cupriavidus taiwanensis (strain DSM 17343 / BCRC 17206 / CCUG 44338 / CIP 107171 / LMG 19424 / R1) (Ralstonia taiwanensis (strain LMG 19424)).